A 463-amino-acid chain; its full sequence is UDP-N-acetylmuramoyl-L-alanyl-D-glutamate--2,6-diaminopimelate ligase (463 aa).

Thr-21 provides a ligand contact to UDP-N-acetyl-alpha-D-muramoyl-L-alanyl-D-glutamate. 94-100 (GTNGKTT) contributes to the ATP binding site. UDP-N-acetyl-alpha-D-muramoyl-L-alanyl-D-glutamate contacts are provided by residues 137-138 (TT), Ser-164, Gln-170, and Arg-172. The residue at position 204 (Lys-204) is an N6-carboxylysine. Residues Arg-358, 382–385 (DNPR), Gly-433, and Glu-437 contribute to the meso-2,6-diaminopimelate site. The Meso-diaminopimelate recognition motif signature appears at 382 to 385 (DNPR).

The protein belongs to the MurCDEF family. MurE subfamily. Requires Mg(2+) as cofactor. Carboxylation is probably crucial for Mg(2+) binding and, consequently, for the gamma-phosphate positioning of ATP.

The protein resides in the cytoplasm. The catalysed reaction is UDP-N-acetyl-alpha-D-muramoyl-L-alanyl-D-glutamate + meso-2,6-diaminopimelate + ATP = UDP-N-acetyl-alpha-D-muramoyl-L-alanyl-gamma-D-glutamyl-meso-2,6-diaminopimelate + ADP + phosphate + H(+). Its pathway is cell wall biogenesis; peptidoglycan biosynthesis. Catalyzes the addition of meso-diaminopimelic acid to the nucleotide precursor UDP-N-acetylmuramoyl-L-alanyl-D-glutamate (UMAG) in the biosynthesis of bacterial cell-wall peptidoglycan. The protein is UDP-N-acetylmuramoyl-L-alanyl-D-glutamate--2,6-diaminopimelate ligase of Helicobacter hepaticus (strain ATCC 51449 / 3B1).